We begin with the raw amino-acid sequence, 157 residues long: Glutaredoxin-2, mitochondrial (157 aa).

The transit peptide at 1-18 (MYWRRAALVGTRLIPVRS) directs the protein to the mitochondrion. Residue S20 is modified to Phosphoserine. In terms of domain architecture, Glutaredoxin spans 51–151 (VNQIQETISN…PLVHQCHLKN (101 aa)). A [2Fe-2S] cluster-binding site is contributed by C62. K68 is a binding site for glutathione. C71 bears the S-glutathionyl cysteine; alternate mark. A disulfide bridge connects residues C71 and C74. Q103 and V115 together coordinate glutathione. Position 147 (C147) interacts with [2Fe-2S] cluster.

This sequence belongs to the glutaredoxin family. As to quaternary structure, monomer; active form. Homodimer; inactive form. The homodimer is probably linked by 1 2Fe-2S cluster.

Its subcellular location is the mitochondrion. The 2Fe-2S present in the homodimer leads to inactivation of the enzyme. The 2Fe-2S may serve as a redox sensor: the presence of one-electron oxidants or reductants leading to the loss of the 2Fe-2S cluster, subsequent monomerization and activation of the enzyme. Its function is as follows. Glutathione-dependent oxidoreductase that facilitates the maintenance of mitochondrial redox homeostasis upon induction of apoptosis by oxidative stress. Involved in response to hydrogen peroxide and regulation of apoptosis caused by oxidative stress. Acts as a very efficient catalyst of monothiol reactions because of its high affinity for protein glutathione-mixed disulfides. Can receive electrons not only from glutathione (GSH), but also from thioredoxin reductase supporting both monothiol and dithiol reactions. Efficiently catalyzes both glutathionylation and deglutathionylation of mitochondrial complex I, which in turn regulates the superoxide production by the complex. Overexpression decreases the susceptibility to apoptosis and prevents loss of cardiolipin and cytochrome c release. This is Glutaredoxin-2, mitochondrial (GLRX2) from Bos taurus (Bovine).